The sequence spans 90 residues: Guanine nucleotide-binding protein subunit gamma (90 aa).

A lipid anchor (S-palmitoyl cysteine) is attached at Cys-86. Cys-87 is modified (cysteine methyl ester). Cys-87 carries S-farnesyl cysteine lipidation. Positions 88-90 (TIM) are cleaved as a propeptide — removed in mature form.

It belongs to the G protein gamma family. In terms of assembly, g proteins are composed of 3 units, alpha, beta and gamma.

It is found in the membrane. In Kluyveromyces lactis (strain ATCC 8585 / CBS 2359 / DSM 70799 / NBRC 1267 / NRRL Y-1140 / WM37) (Yeast), this protein is Guanine nucleotide-binding protein subunit gamma.